Here is a 520-residue protein sequence, read N- to C-terminus: Sodium-dependent dicarboxylate transporter SdcS (520 aa).

14 helical membrane passes run 30–50 (AGQL…LLFF), 55–75 (LPWE…WWIT), 77–97 (AIPI…GHIL), 104–124 (SEYG…AIAM), 160–180 (SMFV…LAII), 207–227 (IGYA…PLII), 242–262 (FAKW…ITWL), 298–318 (KVVQ…EFLL), 323–343 (VTSS…LFVI), 362–382 (ELPW…KGIS), 399–419 (GVSP…LTEV), 428–448 (MILP…LLLM), 452–472 (AMAA…AIIF), and 491–511 (LISA…VLGI).

This sequence belongs to the SLC13A/DASS transporter (TC 2.A.47) family. NADC subfamily.

The protein resides in the cell membrane. In terms of biological role, mediates the transport of the dicarboxylates fumarate, malate, and succinate across the cytoplasmic membrane via a Na(+)-electrochemical gradient. The polypeptide is Sodium-dependent dicarboxylate transporter SdcS (sdcS) (Staphylococcus aureus (strain bovine RF122 / ET3-1)).